Here is a 437-residue protein sequence, read N- to C-terminus: Pterin deaminase (437 aa).

A divalent metal cation is bound by residues His80 and His82. Lys85 serves as a coordination point for substrate. An a divalent metal cation-binding site is contributed by His231. The active-site Proton donor is the Glu234. Residue Asp331 coordinates a divalent metal cation. A substrate-binding site is contributed by 331-332; the sequence is DN.

It belongs to the metallo-dependent hydrolases superfamily. Pterin deaminase family. The cofactor is a divalent metal cation.

It catalyses the reaction a 2-amino-4-hydroxypteridine + H2O + H(+) = a 2,4-dihydroxypteridine + NH4(+). The catalysed reaction is L-sepiapterin + H2O + H(+) = (S)-xanthopterin-B2 + NH4(+). Functionally, catalyzes the deamination of many pterin metabolites, such as formylpterin, pterin-6-carboxylate, pterin-7-carboxylate, pterin, hydroxymethylpterin, biopterin, D-(+)-neopterin, isoxanthopterin, sepiapterin, folate, xanthopterin, and 7,8-dihydrohydroxymethylpterin. May be involved in a degradative pathway for catabolizing pterin rings. This chain is Pterin deaminase, found in Rhizobium rhizogenes (strain K84 / ATCC BAA-868) (Agrobacterium radiobacter).